The primary structure comprises 374 residues: Zinc finger CCCH domain-containing protein 15 homolog (374 aa).

A disordered region spans residues 1–20; it reads MPPKQQGPSKKSEQKRKEKV. Residues 10-20 show a composition bias toward basic and acidic residues; it reads KKSEQKRKEKV. 2 C3H1-type zinc fingers span residues 90-117 and 166-199; these read DPKSLLCVFFKQGLCGKGAKCKFSHDLA and VCKYFLEAVENNKYGWFWECPNGGEKCQYRHCLP.

This sequence belongs to the ZC3H15/TMA46 family.

This chain is Zinc finger CCCH domain-containing protein 15 homolog, found in Caenorhabditis elegans.